A 644-amino-acid polypeptide reads, in one-letter code: Fructose-1,6-bisphosphatase class 3 (644 aa).

The protein belongs to the FBPase class 3 family. It depends on Mn(2+) as a cofactor.

It catalyses the reaction beta-D-fructose 1,6-bisphosphate + H2O = beta-D-fructose 6-phosphate + phosphate. Its pathway is carbohydrate biosynthesis; gluconeogenesis. This chain is Fructose-1,6-bisphosphatase class 3, found in Oceanobacillus iheyensis (strain DSM 14371 / CIP 107618 / JCM 11309 / KCTC 3954 / HTE831).